The sequence spans 717 residues: Delta-1-pyrroline-5-carboxylate synthase A (717 aa).

Residues 1-296 (MEELDRSRAF…WAPITDSNAR (296 aa)) are glutamate 5-kinase. Residues Ser-60, Asp-157, and Asn-176 each contribute to the substrate site. ATP contacts are provided by residues 196–197 (SD) and 236–242 (RGGMTAK). Positions 297–717 (DMAVAARESS…YTHQDIPIQA (421 aa)) are gamma-glutamyl phosphate reductase.

In the N-terminal section; belongs to the glutamate 5-kinase family. The protein in the C-terminal section; belongs to the gamma-glutamyl phosphate reductase family.

The enzyme catalyses L-glutamate + ATP = L-glutamyl 5-phosphate + ADP. It catalyses the reaction L-glutamate 5-semialdehyde + phosphate + NADP(+) = L-glutamyl 5-phosphate + NADPH + H(+). It functions in the pathway amino-acid biosynthesis; L-proline biosynthesis; L-glutamate 5-semialdehyde from L-glutamate: step 1/2. Its pathway is amino-acid biosynthesis; L-proline biosynthesis; L-glutamate 5-semialdehyde from L-glutamate: step 2/2. In terms of biological role, P5CS plays a key role in proline biosynthesis, leading to osmoregulation in plants. The chain is Delta-1-pyrroline-5-carboxylate synthase A (P5CSA) from Arabidopsis thaliana (Mouse-ear cress).